The following is a 314-amino-acid chain: Putative thiamine biosynthesis protein HI_0357 (314 aa).

This sequence belongs to the NMT1/THI5 family.

Its function is as follows. Probably involved in thiamine biosynthesis. The chain is Putative thiamine biosynthesis protein HI_0357 from Haemophilus influenzae (strain ATCC 51907 / DSM 11121 / KW20 / Rd).